We begin with the raw amino-acid sequence, 1059 residues long: Potassium transporter TRK1 (1059 aa).

Topologically, residues 1 to 46 (MLYRVSGFYKRHTRNFTNIDYGYYIRNFIHHIASKIYPYAKVVLPN) are cytoplasmic. The chain crosses the membrane as a helical span at residues 47-67 (FRAAHYFYILTLVILGSILVY). The Extracellular segment spans residues 68–73 (PVKTCA). An intramembrane segment occupies 74 to 90 (YIDVLFFTAGASTQAGL). The Extracellular segment spans residues 91–99 (NTVNVNDLS). Residues 100 to 122 (LYQQIVLYLLATLATPIFIHGSL) form a helical membrane-spanning segment. Over 123 to 625 (LFVRLYYFER…LGGIEYRAVK (503 aa)) the chain is Cytoplasmic. Disordered regions lie at residues 180 to 276 (REAE…IDPE), 304 to 350 (IGSP…EDED), and 404 to 574 (PWTS…SIEN). Over residues 186–203 (SSSSPQSSSSQTSQPVST) the composition is skewed to low complexity. The span at 236–245 (EKIHFEEPQR) shows a compositional bias: basic and acidic residues. The segment covering 335–344 (PATNSVGTGN) has biased composition (polar residues). Over residues 412 to 423 (TLSNSSKKGSLS) the composition is skewed to low complexity. Composition is skewed to acidic residues over residues 428–449 (DTED…SDIS) and 469–490 (YEED…DDGE). The segment covering 524–536 (RSNTLDTPQQNTS) has biased composition (polar residues). A compositionally biased stretch (basic residues) spans 540–552 (KIRKKAPKRKTPR). Positions 556–566 (NASFNQHSNVS) are enriched in polar residues. A helical membrane pass occupies residues 626–649 (LLIKIIVVYYVGFNIIPGVMLSIW). At 650–668 (IYCMPHYKNLMISSSISPA) the chain is on the extracellular side. The stretch at 669–685 (WWAFFTSQSSFNDLGLT) is an intramembrane region. Residues 686 to 696 (LTSNSMMSFNQ) are Extracellular-facing. Residues 697 to 713 (NAFVQILCSFLIVIGNT) traverse the membrane as a helical segment. At 714–757 (GFPILLRFIIWVMFKTARPLSLYKESLGFLLDHPRRCFTLLFPS) the chain is on the cytoplasmic side. A helical membrane pass occupies residues 758 to 781 (VPTWWLFFILVVLNGFDLVIFCIL). Over 782–796 (DLHDDTFKGVDMGYR) the chain is Extracellular. Residues 797–813 (VLNGLFQAFCTRTVGFS) lie within the membrane without spanning it. At 814-820 (VMDLSQL) the chain is on the extracellular side. A helical transmembrane segment spans residues 821 to 844 (HAATQVSYLIMMYISVLPIAISVR). Residues 845 to 877 (RTNVYEEQSLGVYAKENAEGVDESAPSNYVGSH) are Cytoplasmic-facing. Residues 878–899 (LRNQLSYDLWYICLGLFIICIA) traverse the membrane as a helical segment. The Extracellular portion of the chain corresponds to 900–912 (EGKRLKEQDLRFS). An intramembrane segment occupies 913–931 (IFAVLFEIVSAYGTVGMSM). Residues 932–945 (GYPGVDCSLSGEFN) are Extracellular-facing. Residues 946 to 968 (VISKLVIIAMMIRGRHRGLPYTI) traverse the membrane as a helical segment. Over 969–1059 (DRAIMLPNAA…RYVVRTVSEV (91 aa)) the chain is Cytoplasmic.

The protein belongs to the TrkH potassium transport family.

It localises to the cell membrane. It catalyses the reaction K(+)(in) = K(+)(out). The enzyme catalyses chloride(in) = chloride(out). TRK1-mediated chloride conductance is blocked by 4,4'-diisothiocyanatostilbene-2,2'-disulfonic acid. Its function is as follows. Potassium transporter that mediates K(+) influx, as well as Cl(-) efflux as a secondary function. TRK1 is the major K(+) uptake transporter that regulates membrane potential and intracellular pH. The TRK1-mediated Cl(-) efflux should serve as a Cl(-) detoxification route and may play a role in sustaining C.albicans on mammalian epithelial surfaces, or in physiological saline solutions such as saliva. In terms of biological role, mediates candidacidal activities of cysteine-free peptides, but not of defensins. The hallmark of salivary gland-secreted histatin-5 (Hst 5) killing of C.albicans is the rapid efflux of cellular ATP and other small nucleotides and ions from the cell as well as concurrent intracellular uptake of propidium iodide (PI). TRK1 is the channel for Hst 5-induced killing and histatin-5 may directly or indirectly alter TRK1 function, allowing the efflux of larger anions, including ATP, and the influx of small cationic dyes, such as PI. This Candida albicans (Yeast) protein is Potassium transporter TRK1.